The primary structure comprises 663 residues: Translation factor GUF1, mitochondrial (663 aa).

The transit peptide at 1-44 (MRGCLQSVRWLTTALRRPAPQLSCLPFQPFASTSRLFSSCASRA) directs the protein to the mitochondrion. The tr-type G domain maps to 65–245 (ERFRNFCIVA…TIVEQIPAPV (181 aa)). GTP is bound by residues 74 to 81 (AHVDHGKS), 138 to 142 (DTPGH), and 192 to 195 (NKVD).

It belongs to the TRAFAC class translation factor GTPase superfamily. Classic translation factor GTPase family. LepA subfamily.

Its subcellular location is the mitochondrion inner membrane. It catalyses the reaction GTP + H2O = GDP + phosphate + H(+). In terms of biological role, promotes mitochondrial protein synthesis. May act as a fidelity factor of the translation reaction, by catalyzing a one-codon backward translocation of tRNAs on improperly translocated ribosomes. Binds to mitochondrial ribosomes in a GTP-dependent manner. The chain is Translation factor GUF1, mitochondrial from Coccidioides posadasii (strain C735) (Valley fever fungus).